Here is a 437-residue protein sequence, read N- to C-terminus: F-box protein At3g62430 (437 aa).

An F-box domain is found at 1–49 (MDRISNLPDGVIYRVISLLSTKEATCLKYTSKNWLNLVTIIPIAVFVDS).

The protein is F-box protein At3g62430 of Arabidopsis thaliana (Mouse-ear cress).